We begin with the raw amino-acid sequence, 77 residues long: Defensin-like protein 161 (77 aa).

An N-terminal signal peptide occupies residues Met-1–Gly-27. Cystine bridges form between Cys-30–Cys-77, Cys-40–Cys-59, Cys-45–Cys-71, and Cys-49–Cys-73.

This sequence belongs to the DEFL family.

The protein resides in the secreted. The polypeptide is Defensin-like protein 161 (LCR27) (Arabidopsis thaliana (Mouse-ear cress)).